The primary structure comprises 485 residues: Dual specificity protein phosphatase CDC14B (485 aa).

A disordered region spans residues 1-38 (MKRKSERRSAWATAPPCSRRSSSSSPGVKKSRSSTPQE). The Nucleolar localization signal signature appears at 1 to 54 (MKRKSERRSAWATAPPCSRRSSSSSPGVKKSRSSTPQELHRLEQQDDLYLDITD). Residues 15–28 (PPCSRRSSSSSPGV) are compositionally biased toward low complexity. Positions 44–198 (QQDDLYLDIT…AMQYGFFNFN (155 aa)) are a. Residues 199–212 (SFNLDEYEHYEKAE) form a linker region. Residues 213–379 (NGDFNWIIPE…EGDYFRQKLR (167 aa)) are b. Residues 215–374 (DFNWIIPERF…SSLWLEGDYF (160 aa)) form the Tyrosine-protein phosphatase domain. C314 acts as the Phosphocysteine intermediate in catalysis. Positions 402–424 (LNGLENQDNQEPEPYSDDDEVSG) are disordered. A compositionally biased stretch (acidic residues) spans 409–422 (DNQEPEPYSDDDEV).

The protein belongs to the protein-tyrosine phosphatase family. Non-receptor class CDC14 subfamily. Interacts with FZR1/CDH1.

The protein resides in the nucleus. Its subcellular location is the nucleolus. It localises to the nucleoplasm. The catalysed reaction is O-phospho-L-tyrosyl-[protein] + H2O = L-tyrosyl-[protein] + phosphate. The enzyme catalyses O-phospho-L-seryl-[protein] + H2O = L-seryl-[protein] + phosphate. It catalyses the reaction O-phospho-L-threonyl-[protein] + H2O = L-threonyl-[protein] + phosphate. Dual-specificity phosphatase involved in DNA damage response. Essential regulator of the G2 DNA damage checkpoint: following DNA damage, translocates to the nucleus and dephosphorylates FZR1/CDH1, a key activator of the anaphase promoting complex/cyclosome (APC/C). Dephosphorylates SIRT2 around early anaphase. Dephosphorylation of FZR1/CDH1 activates the APC/C, leading to the ubiquitination of PLK1, preventing entry into mitosis. Preferentially dephosphorylates proteins modified by proline-directed kinases. The protein is Dual specificity protein phosphatase CDC14B (Cdc14b) of Mus musculus (Mouse).